The sequence spans 141 residues: Hemoglobin subunit alpha-1 (141 aa).

Residues 1–141 (VLSAADKGNV…VSTVLTSKYR (141 aa)) form the Globin domain. Position 58 (histidine 58) interacts with O2. Histidine 87 serves as a coordination point for heme b.

The protein belongs to the globin family. In terms of assembly, heterotetramer of two alpha chains and two beta chains. As to expression, red blood cells.

In terms of biological role, involved in oxygen transport from the lung to the various peripheral tissues. The polypeptide is Hemoglobin subunit alpha-1 (Bos mutus grunniens (Wild yak)).